The sequence spans 202 residues: MSESLEELAAYLKSKLGDKLEETVLAFGELTIVSRLDAITDVLIFVRDDSRCQFINITDISGVDYPCRDKRFDVSYQLLSPRHNLRLRVKVRTDENIPVASACSIYPGAEWYERETYDMYGILFSGHPDLRRILTDYGFEGHPLRKDFPVTGFVECRYDNEAKRVIYEPVVLRQEMRNFDFLSPWEGAQYILPCDEKTKDKR.

This sequence belongs to the complex I 30 kDa subunit family. As to quaternary structure, NDH-1 is composed of 14 different subunits. Subunits NuoB, C, D, E, F, and G constitute the peripheral sector of the complex.

It is found in the cell inner membrane. It catalyses the reaction a quinone + NADH + 5 H(+)(in) = a quinol + NAD(+) + 4 H(+)(out). Its function is as follows. NDH-1 shuttles electrons from NADH, via FMN and iron-sulfur (Fe-S) centers, to quinones in the respiratory chain. The immediate electron acceptor for the enzyme in this species is believed to be ubiquinone. Couples the redox reaction to proton translocation (for every two electrons transferred, four hydrogen ions are translocated across the cytoplasmic membrane), and thus conserves the redox energy in a proton gradient. This is NADH-quinone oxidoreductase subunit C from Bartonella henselae (strain ATCC 49882 / DSM 28221 / CCUG 30454 / Houston 1) (Rochalimaea henselae).